Here is a 487-residue protein sequence, read N- to C-terminus: uncharacterized protein (487 aa).

Residues 7–28 (HVISIFETLGAYFINIFYNFLY) form a helical membrane-spanning segment. Residues Asn-73, Asn-83, and Asn-195 are each glycosylated (N-linked (GlcNAc...) asparagine; by host). Residues 196-235 (RSLLHQIEELTSEKKSLLADLSTLRKKYEKRQSEYRRLVQ) are a coiled coil. Residues 294-305 (TSQELTSKSPNN) are compositionally biased toward polar residues. Residues 294–324 (TSQELTSKSPNNYPVPHSRTIVSKPSDNYPV) form a disordered region. Asn-462 carries N-linked (GlcNAc...) asparagine; by host glycosylation.

Belongs to the asfivirus B475L family.

It is found in the host membrane. This is an uncharacterized protein from African swine fever virus (isolate Tick/South Africa/Pretoriuskop Pr4/1996) (ASFV).